The following is a 612-amino-acid chain: DNA damage checkpoint protein 1 (612 aa).

Serine 436 carries the phosphoserine modification. Positions 576–612 (GLLNSQNDTSNHKKQDNKEMEDGLGLTQVEKPRGIFD) are disordered. Residues 585 to 596 (SNHKKQDNKEME) show a composition bias toward basic and acidic residues.

The protein belongs to the DDC1 family. As to quaternary structure, component of the checkpoint clamp complex composed of DDC1, MEC3 and RAD17. The interaction with MEC3 is performed in a RAD17-dependent manner. The checkpoint clamp complex loads onto DNA in an ATP-dependent manner through its interaction with the RFC-RAD4 checkpoint clamp loader complex. Interacts with the DNA polymerase zeta subunit REV7 and DPB11. Phosphorylated during cell cycle S-phase and in response to DNA damage. This phosphorylation is MEC14 dependent. Also hosphorylated by CDC28.

The protein localises to the cytoplasm. The protein resides in the nucleus. Component of the checkpoint clamp complex involved in the surveillance mechanism that allows the DNA repair pathways to act to restore the integrity of the DNA prior to DNA synthesis or separation of the replicated chromosomes. Associates with sites of DNA damage and modulates the MEC1 signaling pathway and the activation of RAD53 in response to DNA damage at phase G1. The complex also physically regulates DNA polymerase zeta-dependent mutagenesis by controlling the access of polymerase zeta to damaged DNA. This Saccharomyces cerevisiae (strain ATCC 204508 / S288c) (Baker's yeast) protein is DNA damage checkpoint protein 1 (DDC1).